The chain runs to 453 residues: Mitochondrial import inner membrane translocase subunit TIM44 (453 aa).

T129 is modified (phosphothreonine). Position 167–174 (G167–T174) interacts with ATP. An N6-succinyllysine modification is found at K178. S181 carries the post-translational modification Phosphoserine. At K218 the chain carries N6-succinyllysine.

Belongs to the Tim44 family. Probable component of the PAM complex at least composed of a mitochondrial HSP70 protein, GRPEL1 or GRPEL2, TIMM44, TIMM16/PAM16 and TIMM14/DNAJC19. The complex interacts with the TIMM23 component of the TIM23 complex. Interacts with SLC25A4/ANT1 and SLC25A5/ANT2; leading to inhibit the presequence translocase TIMM23, thereby promoting stabilization of PINK1.

The protein resides in the mitochondrion inner membrane. Its subcellular location is the mitochondrion matrix. Its function is as follows. Essential component of the PAM complex, a complex required for the translocation of transit peptide-containing proteins from the inner membrane into the mitochondrial matrix in an ATP-dependent manner. Recruits mitochondrial HSP70 to drive protein translocation into the matrix using ATP as an energy source. In Rattus norvegicus (Rat), this protein is Mitochondrial import inner membrane translocase subunit TIM44 (Timm44).